We begin with the raw amino-acid sequence, 526 residues long: Bifunctional purine biosynthesis protein PurH (526 aa).

The MGS-like domain maps to 1-148 (MSLNNIIKNA…KNYKDVIVIV (148 aa)).

The protein belongs to the PurH family.

The catalysed reaction is (6R)-10-formyltetrahydrofolate + 5-amino-1-(5-phospho-beta-D-ribosyl)imidazole-4-carboxamide = 5-formamido-1-(5-phospho-D-ribosyl)imidazole-4-carboxamide + (6S)-5,6,7,8-tetrahydrofolate. It catalyses the reaction IMP + H2O = 5-formamido-1-(5-phospho-D-ribosyl)imidazole-4-carboxamide. It participates in purine metabolism; IMP biosynthesis via de novo pathway; 5-formamido-1-(5-phospho-D-ribosyl)imidazole-4-carboxamide from 5-amino-1-(5-phospho-D-ribosyl)imidazole-4-carboxamide (10-formyl THF route): step 1/1. Its pathway is purine metabolism; IMP biosynthesis via de novo pathway; IMP from 5-formamido-1-(5-phospho-D-ribosyl)imidazole-4-carboxamide: step 1/1. This Buchnera aphidicola subsp. Schizaphis graminum (strain Sg) protein is Bifunctional purine biosynthesis protein PurH.